The following is a 315-amino-acid chain: Fructose-1,6-bisphosphatase class 1 (315 aa).

Mg(2+) is bound by residues glutamate 90, aspartate 111, leucine 113, and aspartate 114. Substrate-binding positions include 114–117, tyrosine 222, and lysine 253; that span reads DGSS. Glutamate 259 contacts Mg(2+).

The protein belongs to the FBPase class 1 family. As to quaternary structure, homotetramer. It depends on Mg(2+) as a cofactor.

The protein resides in the cytoplasm. It catalyses the reaction beta-D-fructose 1,6-bisphosphate + H2O = beta-D-fructose 6-phosphate + phosphate. Its pathway is carbohydrate biosynthesis; gluconeogenesis. The sequence is that of Fructose-1,6-bisphosphatase class 1 from Trichlorobacter lovleyi (strain ATCC BAA-1151 / DSM 17278 / SZ) (Geobacter lovleyi).